Reading from the N-terminus, the 357-residue chain is tRNA N6-adenosine threonylcarbamoyltransferase (357 aa).

2 residues coordinate Fe cation: H115 and H119. Substrate-binding positions include 137–141 (LASGG), D170, G183, and N281. Residue D309 participates in Fe cation binding.

This sequence belongs to the KAE1 / TsaD family. The cofactor is Fe(2+).

It localises to the cytoplasm. The enzyme catalyses L-threonylcarbamoyladenylate + adenosine(37) in tRNA = N(6)-L-threonylcarbamoyladenosine(37) in tRNA + AMP + H(+). Its function is as follows. Required for the formation of a threonylcarbamoyl group on adenosine at position 37 (t(6)A37) in tRNAs that read codons beginning with adenine. Is involved in the transfer of the threonylcarbamoyl moiety of threonylcarbamoyl-AMP (TC-AMP) to the N6 group of A37, together with TsaE and TsaB. TsaD likely plays a direct catalytic role in this reaction. The chain is tRNA N6-adenosine threonylcarbamoyltransferase from Nitrobacter hamburgensis (strain DSM 10229 / NCIMB 13809 / X14).